We begin with the raw amino-acid sequence, 433 residues long: 23S rRNA (uracil(1939)-C(5))-methyltransferase RlmD (433 aa).

The TRAM domain occupies 10 to 68 (RTTTRQIITVSVNDLDSFGQGVARHNGKTLFIPGLLPQENAEVTVTEDKKQYARAKVVR). Positions 81, 87, 90, and 162 each coordinate [4Fe-4S] cluster. Positions 265, 294, 299, 315, 342, and 363 each coordinate S-adenosyl-L-methionine. Catalysis depends on C389, which acts as the Nucleophile.

The protein belongs to the class I-like SAM-binding methyltransferase superfamily. RNA M5U methyltransferase family. RlmD subfamily.

The enzyme catalyses uridine(1939) in 23S rRNA + S-adenosyl-L-methionine = 5-methyluridine(1939) in 23S rRNA + S-adenosyl-L-homocysteine + H(+). Functionally, catalyzes the formation of 5-methyl-uridine at position 1939 (m5U1939) in 23S rRNA. This Escherichia coli O6:K15:H31 (strain 536 / UPEC) protein is 23S rRNA (uracil(1939)-C(5))-methyltransferase RlmD.